Consider the following 244-residue polypeptide: Ubiquitin carboxyl-terminal hydrolase mug105 (244 aa).

Catalysis depends on Cys-42, which acts as the Nucleophile. His-165 acts as the Proton acceptor in catalysis. Residue Asp-183 is part of the active site.

This sequence belongs to the peptidase C78 family. ZUFSP subfamily.

It is found in the cytoplasm. The catalysed reaction is Thiol-dependent hydrolysis of ester, thioester, amide, peptide and isopeptide bonds formed by the C-terminal Gly of ubiquitin (a 76-residue protein attached to proteins as an intracellular targeting signal).. Functionally, deubiquitinase with endodeubiquitinase activity that preferentially cleaves 'Lys-48'-linked polyubiquitin chains. Shows only weak activity against 'Lys-63' and 'Lys-11'-linked chains. Has a role in meiosis. This chain is Ubiquitin carboxyl-terminal hydrolase mug105 (mug105), found in Schizosaccharomyces pombe (strain 972 / ATCC 24843) (Fission yeast).